Here is a 230-residue protein sequence, read N- to C-terminus: 2,3-bisphosphoglycerate-dependent phosphoglycerate mutase (230 aa).

Substrate is bound by residues 10–17 (RHGQSKWN), 23–24 (TG), R62, 89–92 (ERHY), K100, 116–117 (RR), and 185–186 (GN). H11 acts as the Tele-phosphohistidine intermediate in catalysis. The active-site Proton donor/acceptor is E89.

The protein belongs to the phosphoglycerate mutase family. BPG-dependent PGAM subfamily. As to quaternary structure, homodimer.

The catalysed reaction is (2R)-2-phosphoglycerate = (2R)-3-phosphoglycerate. It functions in the pathway carbohydrate degradation; glycolysis; pyruvate from D-glyceraldehyde 3-phosphate: step 3/5. Functionally, catalyzes the interconversion of 2-phosphoglycerate and 3-phosphoglycerate. This Buchnera aphidicola subsp. Schizaphis graminum (strain Sg) protein is 2,3-bisphosphoglycerate-dependent phosphoglycerate mutase.